The sequence spans 372 residues: Putative actin-27 (372 aa).

It belongs to the actin family.

It is found in the cytoplasm. The protein resides in the cytoskeleton. It catalyses the reaction ATP + H2O = ADP + phosphate + H(+). Its function is as follows. Actins are highly conserved proteins that are involved in various types of cell motility and are ubiquitously expressed in all eukaryotic cells. Multiple isoforms are involved in various cellular functions such as cytoskeleton structure, cell mobility, chromosome movement and muscle contraction. The protein is Putative actin-27 (act27) of Dictyostelium discoideum (Social amoeba).